A 316-amino-acid polypeptide reads, in one-letter code: Aspartate carbamoyltransferase catalytic subunit (316 aa).

2 residues coordinate carbamoyl phosphate: Arg56 and Thr57. Lys84 serves as a coordination point for L-aspartate. Residues Arg106, His139, and Gln142 each contribute to the carbamoyl phosphate site. Positions 172 and 224 each coordinate L-aspartate. The carbamoyl phosphate site is built by Gly268 and Pro269.

It belongs to the aspartate/ornithine carbamoyltransferase superfamily. ATCase family. As to quaternary structure, heterododecamer (2C3:3R2) of six catalytic PyrB chains organized as two trimers (C3), and six regulatory PyrI chains organized as three dimers (R2).

The enzyme catalyses carbamoyl phosphate + L-aspartate = N-carbamoyl-L-aspartate + phosphate + H(+). Its pathway is pyrimidine metabolism; UMP biosynthesis via de novo pathway; (S)-dihydroorotate from bicarbonate: step 2/3. Functionally, catalyzes the condensation of carbamoyl phosphate and aspartate to form carbamoyl aspartate and inorganic phosphate, the committed step in the de novo pyrimidine nucleotide biosynthesis pathway. In Ligilactobacillus salivarius (strain UCC118) (Lactobacillus salivarius), this protein is Aspartate carbamoyltransferase catalytic subunit.